Here is a 222-residue protein sequence, read N- to C-terminus: Ribonuclease HII (222 aa).

Positions 32-222 (FHIAGVDEVG…LIKRYKEDIS (191 aa)) constitute an RNase H type-2 domain. Asp38, Glu39, and Asp130 together coordinate a divalent metal cation.

Belongs to the RNase HII family. Mn(2+) is required as a cofactor. Requires Mg(2+) as cofactor.

It localises to the cytoplasm. The enzyme catalyses Endonucleolytic cleavage to 5'-phosphomonoester.. Its function is as follows. Endonuclease that specifically degrades the RNA of RNA-DNA hybrids. The chain is Ribonuclease HII from Bartonella bacilliformis (strain ATCC 35685 / KC583 / Herrer 020/F12,63).